Consider the following 512-residue polypeptide: Pentatricopeptide repeat-containing protein At1g64583, mitochondrial (512 aa).

The transit peptide at 1-34 (MRRLIVTGIATSTAKGFRRVVNPNLLGGGAAARA) directs the protein to the mitochondrion. PPR repeat units follow at residues 70 to 104 (SIVD…GISH), 105 to 139 (DLYS…GYEP), 140 to 174 (SIVT…GYEP), 175 to 209 (NVVV…GLGA), 210 to 244 (DVVT…SINP), 245 to 279 (DVVT…SVDP), 280 to 314 (NNVT…GCFP), 315 to 349 (NVVT…GFNA), 350 to 384 (DIFT…RVTP), 385 to 415 (DIIT…MRES), 420 to 454 (GIVA…GVKP), and 455 to 489 (DART…GIIC).

It belongs to the PPR family. P subfamily.

It localises to the mitochondrion. This is Pentatricopeptide repeat-containing protein At1g64583, mitochondrial from Arabidopsis thaliana (Mouse-ear cress).